Consider the following 460-residue polypeptide: tRNA modification GTPase MnmE (460 aa).

3 residues coordinate (6S)-5-formyl-5,6,7,8-tetrahydrofolate: arginine 25, glutamate 87, and arginine 126. The 161-residue stretch at 221 to 381 folds into the TrmE-type G domain; that stretch reads GLKVAIVGRP…LETAIANLVQ (161 aa). Residue asparagine 231 participates in K(+) binding. GTP-binding positions include 231-236, 250-256, and 275-278; these read NVGKSS, TDLPGTT, and DTAG. Serine 235 lines the Mg(2+) pocket. 3 residues coordinate K(+): threonine 250, leucine 252, and threonine 255. Position 256 (threonine 256) interacts with Mg(2+). Lysine 460 is a binding site for (6S)-5-formyl-5,6,7,8-tetrahydrofolate.

It belongs to the TRAFAC class TrmE-Era-EngA-EngB-Septin-like GTPase superfamily. TrmE GTPase family. Homodimer. Heterotetramer of two MnmE and two MnmG subunits. K(+) is required as a cofactor.

It is found in the cytoplasm. Its function is as follows. Exhibits a very high intrinsic GTPase hydrolysis rate. Involved in the addition of a carboxymethylaminomethyl (cmnm) group at the wobble position (U34) of certain tRNAs, forming tRNA-cmnm(5)s(2)U34. In Picosynechococcus sp. (strain ATCC 27264 / PCC 7002 / PR-6) (Agmenellum quadruplicatum), this protein is tRNA modification GTPase MnmE.